We begin with the raw amino-acid sequence, 1093 residues long: NACHT, LRR and PYD domains-containing protein 14 (1093 aa).

The 97-residue stretch at M1 to W97 folds into the Pyrin domain. The disordered stretch occupies residues I102–G121. Residues Q177 to E499 form the NACHT domain. G183–T190 contacts ATP. LRR repeat units lie at residues N730–C750, K759–N780, S787–C807, Y816–S836, R844–S864, T873–T894, S901–C921, N930–S951, N958–C978, N987–S1008, and R1015–Y1035.

The protein belongs to the NLRP family. In terms of tissue distribution, testis-specific.

The protein localises to the cytoplasm. Its function is as follows. May be involved in inflammation and spermatogenesis. This is NACHT, LRR and PYD domains-containing protein 14 (NLRP14) from Homo sapiens (Human).